Here is a 245-residue protein sequence, read N- to C-terminus: Orotidine 5'-phosphate decarboxylase (245 aa).

Residues aspartate 22, lysine 44, 71 to 80 (DLKFHDIPNT), threonine 131, arginine 192, glutamine 201, glycine 221, and arginine 222 each bind substrate. Lysine 73 functions as the Proton donor in the catalytic mechanism.

Belongs to the OMP decarboxylase family. Type 1 subfamily. As to quaternary structure, homodimer.

The catalysed reaction is orotidine 5'-phosphate + H(+) = UMP + CO2. It participates in pyrimidine metabolism; UMP biosynthesis via de novo pathway; UMP from orotate: step 2/2. In terms of biological role, catalyzes the decarboxylation of orotidine 5'-monophosphate (OMP) to uridine 5'-monophosphate (UMP). In Salmonella paratyphi A (strain ATCC 9150 / SARB42), this protein is Orotidine 5'-phosphate decarboxylase.